We begin with the raw amino-acid sequence, 382 residues long: MKLKRQKPKEKFSYDPQKVLKKLEDLAWKILEEAKSGKNPYFDVPTRGLNNVYFDEESRLIRLGDRLSRRYFLNVAHARKFMQTLILMAYIKRLVSEGKHASLREAYYANKHTVPGTRENTFEDQSESDPIIEDLERMLGVLREEMHITADRRGYIYGDIVIKDGEDEFNASKLGTGGWAVPGTVEHIQFPEINVDYVLVVETAAMADRLIEEKYPKRENCLIVATQGQASRGVRRLIHRLHYEEGLPIIVFTDGDPYGWYIYSTIKRGSINLAYLSEKLATPDAKFVGMTMDDIKEYNLENVTEKLKGIPPDKKGGPTGDYKRLIEELNYPWFQDKEWQRQLKLALKWGVRIEQQALANKSLEFVAKEYLPEKIREGKLLP.

Residues 14-155 (YDPQKVLKKL…MHITADRRGY (142 aa)) form the Topo IIA-type catalytic domain. Tyr-108 serves as the catalytic O-(5'-phospho-DNA)-tyrosine intermediate. Mg(2+)-binding residues include Glu-202 and Asp-254.

This sequence belongs to the TOP6A family. As to quaternary structure, homodimer. Heterotetramer of two Top6A and two Top6B chains. Requires Mg(2+) as cofactor.

The catalysed reaction is ATP-dependent breakage, passage and rejoining of double-stranded DNA.. In terms of biological role, relaxes both positive and negative superturns and exhibits a strong decatenase activity. The protein is Type 2 DNA topoisomerase 6 subunit A of Pyrococcus horikoshii (strain ATCC 700860 / DSM 12428 / JCM 9974 / NBRC 100139 / OT-3).